The sequence spans 218 residues: Protein GrpE (218 aa).

Residues 1–78 (MSEFNKDDYL…DSADTLTPLG (78 aa)) form a disordered region. Residues 14–58 (PDPSDAEAAAQASSGADASAESGSAQDSAAQAPSNEGADAAPAAA) show a composition bias toward low complexity.

The protein belongs to the GrpE family. As to quaternary structure, homodimer.

It localises to the cytoplasm. In terms of biological role, participates actively in the response to hyperosmotic and heat shock by preventing the aggregation of stress-denatured proteins, in association with DnaK and GrpE. It is the nucleotide exchange factor for DnaK and may function as a thermosensor. Unfolded proteins bind initially to DnaJ; upon interaction with the DnaJ-bound protein, DnaK hydrolyzes its bound ATP, resulting in the formation of a stable complex. GrpE releases ADP from DnaK; ATP binding to DnaK triggers the release of the substrate protein, thus completing the reaction cycle. Several rounds of ATP-dependent interactions between DnaJ, DnaK and GrpE are required for fully efficient folding. The polypeptide is Protein GrpE (Bifidobacterium longum (strain NCC 2705)).